The following is a 730-amino-acid chain: Catalase-peroxidase 1 (730 aa).

Residues 92–217 (WHSAGTYRTT…LGAAVMGLIY (126 aa)) constitute a cross-link (tryptophyl-tyrosyl-methioninium (Trp-Tyr) (with M-243)). Residue H93 is the Proton acceptor of the active site. The tryptophyl-tyrosyl-methioninium (Tyr-Met) (with W-92) cross-link spans 217 to 243 (YVDPEGPNGNPDPLASAENIRESFGRM). H258 contacts heme b.

This sequence belongs to the peroxidase family. Peroxidase/catalase subfamily. Homodimer or homotetramer. Requires heme b as cofactor. Post-translationally, formation of the three residue Trp-Tyr-Met cross-link is important for the catalase, but not the peroxidase activity of the enzyme.

It carries out the reaction H2O2 + AH2 = A + 2 H2O. The enzyme catalyses 2 H2O2 = O2 + 2 H2O. Functionally, bifunctional enzyme with both catalase and broad-spectrum peroxidase activity. This is Catalase-peroxidase 1 from Haloarcula marismortui (strain ATCC 43049 / DSM 3752 / JCM 8966 / VKM B-1809) (Halobacterium marismortui).